The chain runs to 94 residues: DNA-binding protein HU (94 aa).

The disordered stretch occupies residues 55–94; the sequence is RAERPGRNPKTGEPIMIAASNNPSFKPGKALKDAVKSSAG. Basic and acidic residues predominate over residues 84–94; it reads ALKDAVKSSAG.

Belongs to the bacterial histone-like protein family.

Functionally, histone-like DNA-binding protein which is capable of wrapping DNA to stabilize it, and thus to prevent its denaturation under extreme environmental conditions. This chain is DNA-binding protein HU (hup), found in Xylella fastidiosa (strain Temecula1 / ATCC 700964).